A 407-amino-acid polypeptide reads, in one-letter code: Monooxygenase 2 (407 aa).

Belongs to the 3-hydroxybenzoate 6-hydroxylase family. In terms of assembly, monomer. It depends on FAD as a cofactor. Expressed in seeds, seedlings, roots, leaves, flowers, pollen and siliques.

This is Monooxygenase 2 from Arabidopsis thaliana (Mouse-ear cress).